The following is a 320-amino-acid chain: Minor outer capsid protein P9 (320 aa).

A disordered region spans residues 297-320 (RNDDEEELAGSEFTSLLSDDGRMG).

Belongs to the phytoreovirus minor outer capsid protein P9 family.

Its subcellular location is the virion. It is found in the host cytoplasm. In terms of biological role, minor outer capsid protein. The polypeptide is Minor outer capsid protein P9 (Rice gall dwarf virus (RGDV)).